The chain runs to 247 residues: 5'-nucleotidase SurE (247 aa).

Residues D8, D9, S39, and N91 each coordinate a divalent metal cation.

It belongs to the SurE nucleotidase family. The cofactor is a divalent metal cation.

Its subcellular location is the cytoplasm. It carries out the reaction a ribonucleoside 5'-phosphate + H2O = a ribonucleoside + phosphate. Its function is as follows. Nucleotidase that shows phosphatase activity on nucleoside 5'-monophosphates. In Pelobacter propionicus (strain DSM 2379 / NBRC 103807 / OttBd1), this protein is 5'-nucleotidase SurE.